A 235-amino-acid chain; its full sequence is Ubiquinone/menaquinone biosynthesis C-methyltransferase UbiE (235 aa).

Residues Thr60, Asp80, 106–107 (DV), and Ser123 each bind S-adenosyl-L-methionine.

The protein belongs to the class I-like SAM-binding methyltransferase superfamily. MenG/UbiE family.

The enzyme catalyses a 2-demethylmenaquinol + S-adenosyl-L-methionine = a menaquinol + S-adenosyl-L-homocysteine + H(+). It carries out the reaction a 2-methoxy-6-(all-trans-polyprenyl)benzene-1,4-diol + S-adenosyl-L-methionine = a 5-methoxy-2-methyl-3-(all-trans-polyprenyl)benzene-1,4-diol + S-adenosyl-L-homocysteine + H(+). It functions in the pathway quinol/quinone metabolism; menaquinone biosynthesis; menaquinol from 1,4-dihydroxy-2-naphthoate: step 2/2. The protein operates within cofactor biosynthesis; ubiquinone biosynthesis. Functionally, methyltransferase required for the conversion of demethylmenaquinol (DMKH2) to menaquinol (MKH2) and the conversion of 2-polyprenyl-6-methoxy-1,4-benzoquinol (DDMQH2) to 2-polyprenyl-3-methyl-6-methoxy-1,4-benzoquinol (DMQH2). In Bdellovibrio bacteriovorus (strain ATCC 15356 / DSM 50701 / NCIMB 9529 / HD100), this protein is Ubiquinone/menaquinone biosynthesis C-methyltransferase UbiE.